Here is a 332-residue protein sequence, read N- to C-terminus: MKIYYDQDADLQYLDGKTVAVIGYGSQGHAQSQNLRDSGVKVVVADIPSSENWKKAEEAQFQPLTADEAAREADIIQILVPDEKQAALYRESIAPNLRPGKALVFSHGFNIHFKQIVPPPDVDVFMVAPKGPGHLVRRMYEEGAGVPSLVAVEQDYSGQALNLALAYAKGIGATRAGVIQTTFKEETETDLFGEQAVLCGGITELIRAGFDTLVDAGYQPEIAYFECLHEMKLIVDLIYEGGISTMRYSISDTAEYGDLTRGKRIITEATREEMKKILKEIQDGVFAREWLLENQVGRPVYNALRRKEQNHLIETVGARLRGMMPWLKKKVI.

A KARI N-terminal Rossmann domain is found at 1-181; the sequence is MKIYYDQDAD…GATRAGVIQT (181 aa). Residues 24–27, Ser-50, and 82–85 contribute to the NAD(+) site; these read YGSQ and DEKQ. His-107 is an active-site residue. Residue Gly-133 coordinates NAD(+). In terms of domain architecture, KARI C-terminal knotted spans 182–327; that stretch reads TFKEETETDL…ARLRGMMPWL (146 aa). Positions 190, 194, 226, and 230 each coordinate Mg(2+). Residue Ser-251 participates in substrate binding.

Belongs to the ketol-acid reductoisomerase family. Mg(2+) is required as a cofactor.

The catalysed reaction is (2R)-2,3-dihydroxy-3-methylbutanoate + NAD(+) = (2S)-2-acetolactate + NADH + H(+). It functions in the pathway amino-acid biosynthesis; L-isoleucine biosynthesis; L-isoleucine from 2-oxobutanoate: step 2/4. The protein operates within amino-acid biosynthesis; L-valine biosynthesis; L-valine from pyruvate: step 2/4. Its function is as follows. Involved in the biosynthesis of branched-chain amino acids (BCAA). Catalyzes an alkyl-migration followed by a ketol-acid reduction of (S)-2-acetolactate (S2AL) to yield (R)-2,3-dihydroxy-isovalerate. In the isomerase reaction, S2AL is rearranged via a Mg-dependent methyl migration to produce 3-hydroxy-3-methyl-2-ketobutyrate (HMKB). In the reductase reaction, this 2-ketoacid undergoes a metal-dependent reduction by NADH to yield (R)-2,3-dihydroxy-isovalerate. In Thermacetogenium phaeum (strain ATCC BAA-254 / DSM 26808 / PB), this protein is Ketol-acid reductoisomerase (NAD(+)).